A 270-amino-acid polypeptide reads, in one-letter code: Glucosamine-6-phosphate deaminase (270 aa).

Asp-68 serves as the catalytic Proton acceptor; for enolization step. The active-site For ring-opening step is the Asp-145. The Proton acceptor; for ring-opening step role is filled by His-147. The For ring-opening step role is filled by Glu-152.

Belongs to the glucosamine/galactosamine-6-phosphate isomerase family. NagB subfamily.

It catalyses the reaction alpha-D-glucosamine 6-phosphate + H2O = beta-D-fructose 6-phosphate + NH4(+). It participates in amino-sugar metabolism; N-acetylneuraminate degradation; D-fructose 6-phosphate from N-acetylneuraminate: step 5/5. Catalyzes the reversible isomerization-deamination of glucosamine 6-phosphate (GlcN6P) to form fructose 6-phosphate (Fru6P) and ammonium ion. The sequence is that of Glucosamine-6-phosphate deaminase from Bifidobacterium longum (strain NCC 2705).